Consider the following 431-residue polypeptide: Nuclear envelope integral membrane protein 1 (431 aa).

An N-terminal signal peptide occupies residues 1–29; it reads MAGEVEGEGCRVSWGVLVALLLLPLPSLC. Transmembrane regions (helical) follow at residues 151–171, 175–195, 206–226, 236–256, and 266–286; these read PRLF…DTLS, IFYY…ILVF, PFVA…QLVF, YWQY…AFCY, and SINI…YISV. The interval 176-287 is a; required for its colocalization with lamins at the nuclear envelope; it reads FYYSTGITVG…GLLLMYISVQ (112 aa). The short motif at 317–325 is the Nuclear localization signal element; it reads RKIKLKRGK. Residues 326-395 are b; required for interaction with ran; the sequence is PSPPRLLTEE…LTPNEVSVHE (70 aa). Positions 326–431 are interaction with banf1-a and banf1-b; that stretch reads PSPPRLLTEE…IEPVLYQDLR (106 aa). The tract at residues 368–375 is BAF-binding site (BBS); essential for interaction with banf1-a, banf1-b and ran; the sequence is SRIQSPKR.

This sequence belongs to the NEMP family. As to quaternary structure, homooligomer. Interacts with banf1-a and banf1-b. Interacts with ran-gtp. Post-translationally, phosphorylated.

Its subcellular location is the nucleus inner membrane. It localises to the nucleus envelope. Its function is as follows. In concert with ran, required for proper eye development. May be involved in the expression of early eye marker genes. Contributes to nuclear envelope stiffness in germ cells. Required for fertility. Essential for normal erythropoiesis. Required for efficient nuclear envelope opening and enucleation during the late stages of erythroblast maturation. The polypeptide is Nuclear envelope integral membrane protein 1 (nemp1) (Xenopus tropicalis (Western clawed frog)).